We begin with the raw amino-acid sequence, 400 residues long: Tyrosine-specific transport system 1 (400 aa).

Helical transmembrane passes span 5–25, 34–54, 80–100, 117–137, 143–163, 176–196, 211–231, 250–270, 273–293, 313–333, 335–355, and 370–390; these read VGST…AMPL, FTLV…LLFV, IIAT…YISG, VSVL…THSV, VLFF…LPEI, ALII…GSIP, FSIL…QLST, LNGL…ASAV, FSTL…LECI, LTFI…ILAL, YAGQ…VWKA, and NLTL…PFAI.

The protein belongs to the amino acid/polyamine transporter 2 family. Mtr/TnaB/TyrP permease subfamily.

Its subcellular location is the cell inner membrane. It catalyses the reaction L-tyrosine(in) + H(+)(in) = L-tyrosine(out) + H(+)(out). Transports tyrosine across the cytoplasmic membrane. The transport system is energized by the proton motive force. This is Tyrosine-specific transport system 1 (tyrP-A) from Haemophilus influenzae (strain ATCC 51907 / DSM 11121 / KW20 / Rd).